The chain runs to 196 residues: uncharacterized protein (196 aa).

This is an uncharacterized protein from Mycoplasma pneumoniae (strain ATCC 29342 / M129 / Subtype 1) (Mycoplasmoides pneumoniae).